The chain runs to 307 residues: Porphobilinogen deaminase (307 aa).

Cysteine 241 carries the post-translational modification S-(dipyrrolylmethanemethyl)cysteine.

The protein belongs to the HMBS family. As to quaternary structure, monomer. Requires dipyrromethane as cofactor.

The enzyme catalyses 4 porphobilinogen + H2O = hydroxymethylbilane + 4 NH4(+). It functions in the pathway porphyrin-containing compound metabolism; protoporphyrin-IX biosynthesis; coproporphyrinogen-III from 5-aminolevulinate: step 2/4. Tetrapolymerization of the monopyrrole PBG into the hydroxymethylbilane pre-uroporphyrinogen in several discrete steps. The sequence is that of Porphobilinogen deaminase from Coxiella burnetii (strain CbuG_Q212) (Coxiella burnetii (strain Q212)).